Reading from the N-terminus, the 50-residue chain is Insulin (50 aa).

3 disulfide bridges follow: Cys-7–Cys-36, Cys-19–Cys-49, and Cys-35–Cys-40.

This sequence belongs to the insulin family. In terms of assembly, heterodimer of a B chain and an A chain linked by two disulfide bonds.

The protein localises to the secreted. Functionally, insulin decreases blood glucose concentration. It increases cell permeability to monosaccharides, amino acids and fatty acids. It accelerates glycolysis, the pentose phosphate cycle, and glycogen synthesis in liver. The sequence is that of Insulin (ins) from Oncorhynchus gorbuscha (Pink salmon).